The sequence spans 602 residues: Glutathione-regulated potassium-efflux system protein KefB (602 aa).

Helical transmembrane passes span 4–24 (TGLL…VPIA), 29–49 (IGAV…GLGF), 55–75 (EILH…GLEL), 87–107 (IFGV…ALLY), 115–135 (AAVI…LQLM), 152–172 (VLLF…ILAG), 181–201 (VKIG…RYLL), 207–227 (YIVA…VVLG), 230–250 (LFMD…GILL), 261–281 (IAIE…VGMA), 296–318 (LGVL…VFGL), 326–346 (FAGV…AAFS), and 356–376 (ALLL…MQVI). The RCK N-terminal domain occupies 400 to 519 (DPQVIIVGFG…NGVKDFTRET (120 aa)).

The protein belongs to the monovalent cation:proton antiporter 2 (CPA2) transporter (TC 2.A.37) family. KefB subfamily. In terms of assembly, interacts with the regulatory subunit KefG.

The protein localises to the cell inner membrane. In terms of biological role, pore-forming subunit of a potassium efflux system that confers protection against electrophiles. Catalyzes K(+)/H(+) antiport. This chain is Glutathione-regulated potassium-efflux system protein KefB, found in Yersinia pestis bv. Antiqua (strain Antiqua).